The primary structure comprises 212 residues: Large ribosomal subunit protein uL3 (212 aa).

The interval 119-147 is disordered; that stretch reads YQGNIKRWGQSRGPETHGSRYHRIPGSMG.

The protein belongs to the universal ribosomal protein uL3 family. As to quaternary structure, part of the 50S ribosomal subunit. Forms a cluster with proteins L14 and L19.

In terms of biological role, one of the primary rRNA binding proteins, it binds directly near the 3'-end of the 23S rRNA, where it nucleates assembly of the 50S subunit. The sequence is that of Large ribosomal subunit protein uL3 from Lactobacillus acidophilus (strain ATCC 700396 / NCK56 / N2 / NCFM).